Reading from the N-terminus, the 534-residue chain is Cytochrome c oxidase subunit 1 (534 aa).

Residues 16 to 36 (VLYFIFSVFCGMAGTGMSMII) form a helical membrane-spanning segment. Ca(2+)-binding residues include E39 and G44. Position 62 (H62) interacts with Fe(II)-heme a. 6 helical membrane passes run 64-84 (ILMV…NYLL), 101-121 (ISFW…LVES), 147-167 (AIFA…NFIV), 183-203 (PLFV…LPVL), 235-255 (LFWF…FGVI), and 267-287 (VFGE…GFLV). Cu cation is bound at residue H241. The segment at residues 241–245 (HPEVY) is a cross-link (1'-histidyl-3'-tyrosine (His-Tyr)). Position 245 (Y245) interacts with O2. Cu cation is bound by residues H290 and H291. The next 2 helical transmembrane spans lie at 310–330 (MIIA…IYGG) and 338–358 (MMYA…GVAL). The Mg(2+) site is built by H368 and D369. 2 helical membrane passes run 372-392 (YVVA…MFAG) and 414-434 (FWLI…LGIN). Position 376 (H376) interacts with heme a3. Residue H378 participates in Fe(II)-heme a binding. Ca(2+) is bound at residue P441. Residues 453–473 (VSSIGSFIAMISLILFIYILF) form a helical membrane-spanning segment.

It belongs to the heme-copper respiratory oxidase family. In terms of assembly, component of the cytochrome c oxidase (complex IV, CIV), a multisubunit enzyme composed of a catalytic core of 3 subunits and several supernumerary subunits. The complex exists as a monomer or a dimer and forms supercomplexes (SCs) in the inner mitochondrial membrane with ubiquinol-cytochrome c oxidoreductase (cytochrome b-c1 complex, complex III, CIII). Heme is required as a cofactor. The cofactor is Cu cation.

The protein localises to the mitochondrion inner membrane. The enzyme catalyses 4 Fe(II)-[cytochrome c] + O2 + 8 H(+)(in) = 4 Fe(III)-[cytochrome c] + 2 H2O + 4 H(+)(out). It functions in the pathway energy metabolism; oxidative phosphorylation. Its function is as follows. Component of the cytochrome c oxidase, the last enzyme in the mitochondrial electron transport chain which drives oxidative phosphorylation. The respiratory chain contains 3 multisubunit complexes succinate dehydrogenase (complex II, CII), ubiquinol-cytochrome c oxidoreductase (cytochrome b-c1 complex, complex III, CIII) and cytochrome c oxidase (complex IV, CIV), that cooperate to transfer electrons derived from NADH and succinate to molecular oxygen, creating an electrochemical gradient over the inner membrane that drives transmembrane transport and the ATP synthase. Cytochrome c oxidase is the component of the respiratory chain that catalyzes the reduction of oxygen to water. Electrons originating from reduced cytochrome c in the intermembrane space (IMS) are transferred via the dinuclear copper A center (CU(A)) of subunit 2 and heme A of subunit 1 to the active site in subunit 1, a binuclear center (BNC) formed by heme A3 and copper B (CU(B)). The BNC reduces molecular oxygen to 2 water molecules using 4 electrons from cytochrome c in the IMS and 4 protons from the mitochondrial matrix. In Vanderwaltozyma polyspora (strain ATCC 22028 / DSM 70294 / BCRC 21397 / CBS 2163 / NBRC 10782 / NRRL Y-8283 / UCD 57-17) (Kluyveromyces polysporus), this protein is Cytochrome c oxidase subunit 1 (COX1).